The primary structure comprises 424 residues: Serine--tRNA ligase (424 aa).

L-serine is bound at residue 232-234 (TAE). 263–265 (RSE) is an ATP binding site. Glu-286 contacts L-serine. 350–353 (EISS) provides a ligand contact to ATP. Residue Ser-385 coordinates L-serine.

It belongs to the class-II aminoacyl-tRNA synthetase family. Type-1 seryl-tRNA synthetase subfamily. Homodimer. The tRNA molecule binds across the dimer.

It is found in the cytoplasm. The catalysed reaction is tRNA(Ser) + L-serine + ATP = L-seryl-tRNA(Ser) + AMP + diphosphate + H(+). It catalyses the reaction tRNA(Sec) + L-serine + ATP = L-seryl-tRNA(Sec) + AMP + diphosphate + H(+). It functions in the pathway aminoacyl-tRNA biosynthesis; selenocysteinyl-tRNA(Sec) biosynthesis; L-seryl-tRNA(Sec) from L-serine and tRNA(Sec): step 1/1. Catalyzes the attachment of serine to tRNA(Ser). Is also able to aminoacylate tRNA(Sec) with serine, to form the misacylated tRNA L-seryl-tRNA(Sec), which will be further converted into selenocysteinyl-tRNA(Sec). This is Serine--tRNA ligase from Latilactobacillus sakei subsp. sakei (strain 23K) (Lactobacillus sakei subsp. sakei).